We begin with the raw amino-acid sequence, 271 residues long: NAD kinase (271 aa).

The active-site Proton acceptor is the Asp-64. Residues Asp-64 to Gly-65, Arg-69, Asn-132 to Glu-133, Lys-143, Arg-160, Asp-162, Thr-173 to Ser-178, Ala-197, and Gln-231 contribute to the NAD(+) site.

It belongs to the NAD kinase family. A divalent metal cation is required as a cofactor.

The protein resides in the cytoplasm. It catalyses the reaction NAD(+) + ATP = ADP + NADP(+) + H(+). Its function is as follows. Involved in the regulation of the intracellular balance of NAD and NADP, and is a key enzyme in the biosynthesis of NADP. Catalyzes specifically the phosphorylation on 2'-hydroxyl of the adenosine moiety of NAD to yield NADP. This is NAD kinase from Methanocorpusculum labreanum (strain ATCC 43576 / DSM 4855 / Z).